A 582-amino-acid chain; its full sequence is Proline--tRNA ligase (582 aa).

The protein belongs to the class-II aminoacyl-tRNA synthetase family. ProS type 1 subfamily. As to quaternary structure, homodimer.

It localises to the cytoplasm. The enzyme catalyses tRNA(Pro) + L-proline + ATP = L-prolyl-tRNA(Pro) + AMP + diphosphate. Functionally, catalyzes the attachment of proline to tRNA(Pro) in a two-step reaction: proline is first activated by ATP to form Pro-AMP and then transferred to the acceptor end of tRNA(Pro). As ProRS can inadvertently accommodate and process non-cognate amino acids such as alanine and cysteine, to avoid such errors it has two additional distinct editing activities against alanine. One activity is designated as 'pretransfer' editing and involves the tRNA(Pro)-independent hydrolysis of activated Ala-AMP. The other activity is designated 'posttransfer' editing and involves deacylation of mischarged Ala-tRNA(Pro). The misacylated Cys-tRNA(Pro) is not edited by ProRS. This chain is Proline--tRNA ligase, found in Mycobacterium avium (strain 104).